The primary structure comprises 166 residues: MKRTVFPLAVAAALTLTACETILNNLPGVYSIDIEQGNMIDQAMVDQLRPNMSKRQVLYIMGSPMLTDTFHERRWDYLYSDQPGGEARVQKRISLFFDGDNLIGVQGDFRPSKLPVIKESTETTVDVPKRNLDKTMWEKITGLFSNDDSGEMPVKPESKPSDLLNE.

The N-terminal stretch at 1–18 (MKRTVFPLAVAAALTLTA) is a signal peptide. Cys-19 carries the N-palmitoyl cysteine lipid modification. Residue Cys-19 is the site of S-diacylglycerol cysteine attachment. Positions 143–166 (LFSNDDSGEMPVKPESKPSDLLNE) are disordered.

This sequence belongs to the BamE family. In terms of assembly, part of the Bam complex.

The protein resides in the cell outer membrane. Its function is as follows. Part of the outer membrane protein assembly complex, which is involved in assembly and insertion of beta-barrel proteins into the outer membrane. The chain is Outer membrane protein assembly factor BamE from Methylomonas methanica (strain DSM 25384 / MC09).